We begin with the raw amino-acid sequence, 320 residues long: ATP-dependent 6-phosphofructokinase (320 aa).

Residue glycine 12 participates in ATP binding. ADP is bound at residue 22–26; sequence RGVVR. Residues 73–74 and 103–106 each bind ATP; these read RF and GDGS. Residue aspartate 104 coordinates Mg(2+). 126–128 provides a ligand contact to substrate; it reads TID. Aspartate 128 functions as the Proton acceptor in the catalytic mechanism. Arginine 155 is a binding site for ADP. Residues arginine 163 and 170-172 contribute to the substrate site; that span reads MGR. ADP contacts are provided by residues 186-188, lysine 212, and 214-216; these read GCE and KKH. Substrate-binding positions include glutamate 223, arginine 244, and 250–253; that span reads HIQR.

The protein belongs to the phosphofructokinase type A (PFKA) family. ATP-dependent PFK group I subfamily. Prokaryotic clade 'B1' sub-subfamily. Homotetramer. Mg(2+) serves as cofactor.

The protein localises to the cytoplasm. The catalysed reaction is beta-D-fructose 6-phosphate + ATP = beta-D-fructose 1,6-bisphosphate + ADP + H(+). It participates in carbohydrate degradation; glycolysis; D-glyceraldehyde 3-phosphate and glycerone phosphate from D-glucose: step 3/4. Its activity is regulated as follows. Allosterically activated by ADP and other diphosphonucleosides, and allosterically inhibited by phosphoenolpyruvate. Catalyzes the phosphorylation of D-fructose 6-phosphate to fructose 1,6-bisphosphate by ATP, the first committing step of glycolysis. This chain is ATP-dependent 6-phosphofructokinase, found in Blochmanniella floridana.